The sequence spans 1712 residues: Latent-transforming growth factor beta-binding protein 1 (1712 aa).

A signal peptide spans 1–20 (MAGAWLRWGLLLWAGLLAWS). The segment at 63–148 (SSTATSSRSL…QDTQSSGGSR (86 aa)) is disordered. Residues 136–147 (KVQQDTQSSGGS) are compositionally biased toward polar residues. An EGF-like 1 domain is found at 181–213 (TKPSCVPPCQNGGMCLRPQFCVCKPGTKGKACE). Disulfide bonds link Cys-185–Cys-195, Cys-189–Cys-201, and Cys-203–Cys-212. N-linked (GlcNAc...) asparagine glycosylation is found at Asn-339 and Asn-370. The 33-residue stretch at 391-423 (RVVICHLPCMNGGQCSSRDKCQCPPNFTGKLCQ) folds into the EGF-like 2 domain. Intrachain disulfides connect Cys-395–Cys-405, Cys-399–Cys-411, Cys-413–Cys-422, Cys-551–Cys-573, Cys-560–Cys-586, and Cys-574–Cys-589. Asn-416 carries N-linked (GlcNAc...) asparagine glycosylation. The region spanning 549–601 (GRCFQETIGSQCGKALPGLSKQEDCCGTVGTSWGFNKCQKCPKKQSYHGYTQM) is the TB 1 domain. N-linked (GlcNAc...) asparagine glycosylation occurs at Asn-612. In terms of domain architecture, EGF-like 3; calcium-binding spans 618–658 (DINECQLQGVCPNGECLNTMGSYRCSCKMGFGPDPTFSSCV). Intrachain disulfides connect Cys-622/Cys-633, Cys-628/Cys-642, Cys-644/Cys-657, Cys-671/Cys-694, Cys-681/Cys-706, Cys-695/Cys-709, and Cys-696/Cys-721. The O-linked (Glc) serine glycan is linked to Ser-639. In terms of domain architecture, TB 2 spans 669–721 (GPCYRLVSPGRQCMHPLSVHLTKQICCCSVGKAWGPQCEKCPLPGTAAFKEIC). Residues 752-803 (KNTQPVAKSTHPPPLPAKEEPVEALTSSREHGPGVAEPEVVTAPPEKEIPSL) are disordered. 2 O-linked (GalNAc...) threonine glycosylation sites follow: Thr-761 and Thr-793. One can recognise an EGF-like 4; calcium-binding domain in the interval 865–906 (EINECTVNPDICGAGHCINLPVRYTCICYEGYKFSEQQRKCI). Cystine bridges form between Cys-869-Cys-881, Cys-876-Cys-890, Cys-892-Cys-905, Cys-911-Cys-923, Cys-918-Cys-932, Cys-934-Cys-947, Cys-953-Cys-964, Cys-959-Cys-973, Cys-976-Cys-988, Cys-994-Cys-1005, Cys-1000-Cys-1014, Cys-1017-Cys-1028, Cys-1034-Cys-1045, Cys-1040-Cys-1054, Cys-1056-Cys-1069, Cys-1075-Cys-1086, Cys-1081-Cys-1095, Cys-1097-Cys-1110, Cys-1116-Cys-1127, Cys-1122-Cys-1136, Cys-1138-Cys-1151, Cys-1157-Cys-1169, Cys-1164-Cys-1178, Cys-1180-Cys-1192, Cys-1198-Cys-1210, Cys-1204-Cys-1219, Cys-1221-Cys-1234, Cys-1240-Cys-1252, Cys-1246-Cys-1261, Cys-1263-Cys-1276, Cys-1282-Cys-1294, Cys-1289-Cys-1303, Cys-1305-Cys-1319, Cys-1340-Cys-1363, Cys-1350-Cys-1375, Cys-1364-Cys-1380, and Cys-1365-Cys-1392. The EGF-like 5; calcium-binding domain maps to 907–948 (DIDECAQAQHLCSQGRCENTEGSFLCICPAGFIASEEGSNCI). O-linked (Glc) serine glycosylation occurs at Ser-929. The 41-residue stretch at 949-989 (DVDECLRPDVCRDGRCINTAGAFRCEYCDSGYRMSRRGHCE) folds into the EGF-like 6; calcium-binding domain. The residue at position 966 (Asn-966) is a (3R)-3-hydroxyasparagine. The 40-residue stretch at 990-1029 (DIDECLTPSTCPEEQCVNSPGSYQCVPCTEGFRGWNGQCL) folds into the EGF-like 7; calcium-binding domain. Ser-1011 carries an O-linked (Glc) serine glycan. The region spanning 1030–1070 (DVDECLQPKVCTNGSCTNLEGSYMCSCHKGYSPTPDHRHCQ) is the EGF-like 8; calcium-binding domain. Residue Asn-1042 is glycosylated (N-linked (GlcNAc...) asparagine). The O-linked (Glc) serine glycan is linked to Ser-1051. Residues 1071–1111 (DIDECQQGNLCMNGQCKNTDGSFRCTCGQGYQLSAAKDQCE) form the EGF-like 9; calcium-binding domain. In terms of domain architecture, EGF-like 10; calcium-binding spans 1112–1152 (DIDECEHRHLCSHGQCRNTEGSFQCLCNQGYRASVLGDHCE). The residue at position 1129 (Asn-1129) is a (3R)-3-hydroxyasparagine. Ser-1133 carries an O-linked (Glc) serine glycan. One can recognise an EGF-like 11; calcium-binding domain in the interval 1153–1193 (DINECLEDSSVCQGGDCINTAGSYDCTCPDGLQLNDNKGCQ). Residues 1194–1235 (DINECAQPGLCAPHGECLNTQGSFHCVCEQGFSISADGRTCE) enclose the EGF-like 12; calcium-binding domain. A glycan (O-linked (Glc) serine) is linked at Ser-1216. Residues 1236–1277 (DIDECVNNTVCDSHGFCDNTAGSFRCLCYQGFQAPQDGQGCV) enclose the EGF-like 13; calcium-binding domain. Residue Asn-1242 is glycosylated (N-linked (GlcNAc...) asparagine). The 43-residue stretch at 1278–1320 (DVNECELLSGVCGEAFCENVEGSFLCVCADENQEYSPMTGQCR) folds into the EGF-like 14; calcium-binding domain. The tract at residues 1335 to 1402 (EEKKECYYNL…PRGKGFVPAG (68 aa)) is 8-Cys3 region. One can recognise a TB 3 domain in the interval 1338 to 1392 (KECYYNLNDASLCDNVLAPNVTKQECCCTSGAGWGDNCEIFPCPVQGTAEFSEMC). Residue Asn-1357 is glycosylated (N-linked (GlcNAc...) asparagine). Ser-1405 is subject to Phosphoserine. An EGF-like 15; calcium-binding domain is found at 1415–1457 (DADECLLFGEEICKNGYCLNTQPGYECYCKEGTYYDPVKLQCF). Intrachain disulfides connect Cys-1419–Cys-1432, Cys-1427–Cys-1441, Cys-1443–Cys-1456, Cys-1462–Cys-1473, Cys-1468–Cys-1482, Cys-1484–Cys-1497, Cys-1517–Cys-1541, Cys-1527–Cys-1553, Cys-1542–Cys-1556, and Cys-1543–Cys-1568. An EGF-like 16; calcium-binding domain is found at 1458–1498 (DMDECQDPNSCIDGQCVNTEGSYNCFCTHPMVLDASEKRCV). Ser-1479 carries an O-linked (Glc) serine glycan. The segment at 1498 to 1712 (VQPTESNEQI…LNLDKDSDLE (215 aa)) is C-terminal domain. Positions 1515–1568 (DLCWEHLSEEYVCSRPLVGKQTTYTECCCLYGEAWGMQCALCPMKDSDDYAQLC) constitute a TB 4 domain. A phosphoserine mark is found at Ser-1588 and Ser-1607. Positions 1612-1652 (QAEECGILNGCENGRCVRVQEGYTCDCFDGYHLDMAKMTCV) constitute an EGF-like 17 domain. Intrachain disulfides connect Cys-1616–Cys-1627, Cys-1622–Cys-1636, Cys-1638–Cys-1651, Cys-1657–Cys-1672, Cys-1667–Cys-1681, and Cys-1683–Cys-1696. Positions 1653–1697 (DVNECSELNNRMSLCKNAKCINTEGSYKCVCLPGYVPSDKPNYCT) constitute an EGF-like 18; calcium-binding domain. O-linked (Glc) serine glycosylation is present at Ser-1678.

This sequence belongs to the LTBP family. Interacts with TGFB1; associates via disulfide bonds with the Latency-associated peptide chain (LAP) regulatory chain of TGFB1, leading to regulate activation of TGF-beta-1. LTBP1 does not bind directly to TGF-beta-1, the active chain of TGFB1. Interacts (via C-terminal domain) with FBN1 (via N-terminal domain). Interacts with FBN2. Interacts with ADAMTSL2. Interacts with EFEMP2. In terms of processing, contains hydroxylated asparagine residues. Two intrachain disulfide bonds from the TB3 domain are rearranged upon TGFB1 binding, and form interchain bonds with TGFB1 propeptide, anchoring it to the extracellular matrix. Post-translationally, O-glycosylated on serine residues by POGLUT2 and POGLUT3.

The protein localises to the secreted. Its subcellular location is the extracellular space. It is found in the extracellular matrix. In terms of biological role, key regulator of transforming growth factor beta (TGFB1, TGFB2 and TGFB3) that controls TGF-beta activation by maintaining it in a latent state during storage in extracellular space. Associates specifically via disulfide bonds with the Latency-associated peptide (LAP), which is the regulatory chain of TGF-beta, and regulates integrin-dependent activation of TGF-beta. Outcompeted by LRRC32/GARP for binding to LAP regulatory chain of TGF-beta. The sequence is that of Latent-transforming growth factor beta-binding protein 1 (Ltbp1) from Rattus norvegicus (Rat).